The chain runs to 246 residues: Probable transcriptional regulatory protein CGSHiEE_01480 (246 aa).

The protein belongs to the TACO1 family.

It is found in the cytoplasm. In Haemophilus influenzae (strain PittEE), this protein is Probable transcriptional regulatory protein CGSHiEE_01480.